A 212-amino-acid polypeptide reads, in one-letter code: Probable nicotinate-nucleotide adenylyltransferase (212 aa).

It belongs to the NadD family.

It carries out the reaction nicotinate beta-D-ribonucleotide + ATP + H(+) = deamido-NAD(+) + diphosphate. Its pathway is cofactor biosynthesis; NAD(+) biosynthesis; deamido-NAD(+) from nicotinate D-ribonucleotide: step 1/1. Its function is as follows. Catalyzes the reversible adenylation of nicotinate mononucleotide (NaMN) to nicotinic acid adenine dinucleotide (NaAD). The chain is Probable nicotinate-nucleotide adenylyltransferase from Shewanella sp. (strain ANA-3).